A 223-amino-acid polypeptide reads, in one-letter code: ATP-dependent dethiobiotin synthetase BioD (223 aa).

Thr16 is a Mg(2+) binding site. Lys37 is an active-site residue. Ser41 is a binding site for substrate. Mg(2+)-binding residues include Asp50 and Glu111. ATP is bound by residues Asp50, 111–114 (EGAG), and 171–172 (NR).

This sequence belongs to the dethiobiotin synthetase family. As to quaternary structure, homodimer. The cofactor is Mg(2+).

The protein localises to the cytoplasm. The catalysed reaction is (7R,8S)-7,8-diammoniononanoate + CO2 + ATP = (4R,5S)-dethiobiotin + ADP + phosphate + 3 H(+). Its pathway is cofactor biosynthesis; biotin biosynthesis; biotin from 7,8-diaminononanoate: step 1/2. Its function is as follows. Catalyzes a mechanistically unusual reaction, the ATP-dependent insertion of CO2 between the N7 and N8 nitrogen atoms of 7,8-diaminopelargonic acid (DAPA, also called 7,8-diammoniononanoate) to form a ureido ring. In Anaeromyxobacter dehalogenans (strain 2CP-C), this protein is ATP-dependent dethiobiotin synthetase BioD.